A 190-amino-acid polypeptide reads, in one-letter code: Biphenyl-2,3-diol 1,2-dioxygenase 2 (190 aa).

In terms of domain architecture, VOC spans 6–124 (KFAHVVLQTS…DGNFVELQID (119 aa)). Fe cation is bound by residues histidine 9, histidine 72, and glutamate 120.

It belongs to the extradiol ring-cleavage dioxygenase family. As to quaternary structure, homohexamer. Fe(2+) serves as cofactor.

It carries out the reaction biphenyl-2,3-diol + O2 = 2-hydroxy-6-oxo-6-phenylhexa-2,4-dienoate + H(+). Its pathway is xenobiotic degradation; biphenyl degradation; 2-hydroxy-2,4-pentadienoate and benzoate from biphenyl: step 3/4. This chain is Biphenyl-2,3-diol 1,2-dioxygenase 2 (bphC2), found in Rhodococcus globerulus.